We begin with the raw amino-acid sequence, 214 residues long: Thymidylate kinase (214 aa).

Residue 7 to 14 coordinates ATP; that stretch reads GIDGAGKS.

Belongs to the thymidylate kinase family.

The catalysed reaction is dTMP + ATP = dTDP + ADP. Its function is as follows. Phosphorylation of dTMP to form dTDP in both de novo and salvage pathways of dTTP synthesis. This chain is Thymidylate kinase, found in Chlorobaculum tepidum (strain ATCC 49652 / DSM 12025 / NBRC 103806 / TLS) (Chlorobium tepidum).